A 440-amino-acid chain; its full sequence is MESQQLSNYPQISHGSACASVTSKEVHTNQDPLDVSASKTEECEKASTKANSQQTTTPASSAVPENPHHASPQPASVPPPQNGPYPQQCMMTQNQANPSGWSFYGHPSMIPYTPYQMSPMYFPPGPQSQFPQYPSSVGTPLSTPSPESGNTFTDSSSADSDMTSTKKYVRPPPMLTSPNDFPNWVKTYIKFLQNSNLGGIIPTVNGKPVRQITDDELTFLYNTFQIFAPSQFLPTWVKDILSVDYTDIMKILSKSIEKMQSDTQEANDIVTLANLQYNGSTPADAFETKVTNIINRLNNNGIHINNKVACQLIMRGLSGEYKFLRYTRHRHLNMTVAELFLDIHAIYEEQQGSRNSKPNYRRNLSDEKNDSRSYTNTTKPKVIARNPQKTNNSKSKTARAHNVSTSNNSPSTDNDSISKSTTEPIQLNNKHDLHLRPGTY.

Polar residues-rich tracts occupy residues 1 to 23, 48 to 60, and 127 to 152; these read MESQ…SVTS, TKAN…TPAS, and QSQF…GNTF. Disordered regions lie at residues 1-93, 126-173, and 352-440; these read MESQ…MMTQ, PQSQ…RPPP, and GSRN…PGTY. Residues 153-165 are compositionally biased toward low complexity; the sequence is TDSSSADSDMTST. The tract at residues 299–401 is RNA-binding; it reads NNGIHINNKV…NSKSKTARAH (103 aa). The span at 402–418 shows a compositional bias: low complexity; the sequence is NVSTSNNSPSTDNDSIS. Position 416 is a phosphoserine (S416). Polar residues predominate over residues 419 to 428; it reads KSTTEPIQLN. The span at 429–440 shows a compositional bias: basic and acidic residues; the sequence is NKHDLHLRPGTY.

Homotrimer.

The protein resides in the cytoplasm. Functionally, capsid protein (CA) is the structural component of the virus-like particle (VLP), forming the shell that encapsulates the retrotransposons dimeric RNA genome. The particles are assembled from trimer-clustered units and there are holes in the capsid shells that allow for the diffusion of macromolecules. CA also has nucleocapsid-like chaperone activity, promoting primer tRNA(i)-Met annealing to the multipartite primer-binding site (PBS), dimerization of Ty1 RNA and initiation of reverse transcription. In Saccharomyces cerevisiae (strain ATCC 204508 / S288c) (Baker's yeast), this protein is Transposon Ty1-OL Gag polyprotein (TY1A-OL).